A 544-amino-acid polypeptide reads, in one-letter code: Chaperonin GroEL 2 (544 aa).

Residues 29–32 (TLGP), 86–90 (DGTTT), Gly413, 482–484 (NVL), and Asp498 contribute to the ATP site.

It belongs to the chaperonin (HSP60) family. Forms a cylinder of 14 subunits composed of two heptameric rings stacked back-to-back. Interacts with the co-chaperonin GroES.

It is found in the cytoplasm. The enzyme catalyses ATP + H2O + a folded polypeptide = ADP + phosphate + an unfolded polypeptide.. Its function is as follows. Together with its co-chaperonin GroES, plays an essential role in assisting protein folding. The GroEL-GroES system forms a nano-cage that allows encapsulation of the non-native substrate proteins and provides a physical environment optimized to promote and accelerate protein folding. The sequence is that of Chaperonin GroEL 2 from Roseiflexus sp. (strain RS-1).